A 151-amino-acid chain; its full sequence is Ocs element-binding factor 1 (151 aa).

The span at 1-17 (MSSSSLSPTAGRTSGSD) shows a compositional bias: polar residues. The disordered stretch occupies residues 1 to 47 (MSSSSLSPTAGRTSGSDGDSAADTHRREKRRLSNRESARRSRLRKQQ). The segment covering 22–39 (ADTHRREKRRLSNRESAR) has biased composition (basic and acidic residues). Residues 24–87 (THRREKRRLS…TRVEQENTVL (64 aa)) form the bZIP domain. Residues 26–45 (RREKRRLSNRESARRSRLRK) are basic motif. The tract at residues 52–59 (LVQEVARL) is leucine-zipper.

Belongs to the bZIP family. In terms of tissue distribution, roots and shoots of young plants, and basal portion of leaves.

It localises to the nucleus. In terms of biological role, may contribute to developmentally specific patterns of gene expression. Binds specifically to ocs elements which are transcriptional enhancer found in the promoters of several plant genes. OCSBF-1 is able to bind to a site within each half of the ocs element as well as to animal AP-1 and CREB sites. This Zea mays (Maize) protein is Ocs element-binding factor 1 (OBF1).